A 184-amino-acid chain; its full sequence is uncharacterized protein (184 aa).

This is an uncharacterized protein from Methanocaldococcus jannaschii (strain ATCC 43067 / DSM 2661 / JAL-1 / JCM 10045 / NBRC 100440) (Methanococcus jannaschii).